The sequence spans 392 residues: MITIGTALRPAATRVMLLGAGELGKEVAIECQRLGIEVIAVGHYADAPAMHIAHRHHVINMLDGAALRAVIEHERPHFIVPEIEAIATDMLVTLEQEGHHVVPCANATRLTMNREGIRRLAAETLSLPTSRYRFAADRAELDKAVEAIGYPFIIKPVMSSSGKGQSLVRDAAQLDAAWQYAQLGGRAGGGKVIVEGLVAFDFEITLLTINAVDGIHFCAPIGHRQEDGDYRESWQPQHMSALARQRAQTIAADVVTALGGKGLFGVELFICGDDVIFSEVSPRPHDTGMVTLISQDLSEFALHVRAFLGLPIGTIRQYGPAASAVILPELQSDNVSFSGLENALAAGQQIRLFGKPDLSGKRRLGVALAVAATVEEAVTVAKDAAAAVRVTG.

N(1)-(5-phospho-beta-D-ribosyl)glycinamide is bound by residues 22–23 and Glu82; that span reads EL. ATP is bound by residues Arg114, Lys155, 160–165, 195–198, and Glu203; these read SSGKGQ and EGLV. The 190-residue stretch at 119-308 folds into the ATP-grasp domain; sequence RLAAETLSLP…EFALHVRAFL (190 aa). 2 residues coordinate Mg(2+): Glu267 and Glu279. N(1)-(5-phospho-beta-D-ribosyl)glycinamide contacts are provided by residues Asp286, Lys355, and 362–363; that span reads RR.

Belongs to the PurK/PurT family. In terms of assembly, homodimer.

The catalysed reaction is N(1)-(5-phospho-beta-D-ribosyl)glycinamide + formate + ATP = N(2)-formyl-N(1)-(5-phospho-beta-D-ribosyl)glycinamide + ADP + phosphate + H(+). It participates in purine metabolism; IMP biosynthesis via de novo pathway; N(2)-formyl-N(1)-(5-phospho-D-ribosyl)glycinamide from N(1)-(5-phospho-D-ribosyl)glycinamide (formate route): step 1/1. In terms of biological role, involved in the de novo purine biosynthesis. Catalyzes the transfer of formate to 5-phospho-ribosyl-glycinamide (GAR), producing 5-phospho-ribosyl-N-formylglycinamide (FGAR). Formate is provided by PurU via hydrolysis of 10-formyl-tetrahydrofolate. The chain is Formate-dependent phosphoribosylglycinamide formyltransferase from Sodalis glossinidius (strain morsitans).